We begin with the raw amino-acid sequence, 370 residues long: Putative replication factor C small subunit L478 (370 aa).

41 to 48 contributes to the ATP binding site; sequence GPSGSGKK. Residues 342–353 are compositionally biased toward basic and acidic residues; that stretch reads RNKEPEKSEKTK. The tract at residues 342–370 is disordered; sequence RNKEPEKSEKTKSKTGKLSRTNSKKTIKN. The span at 354–370 shows a compositional bias: basic residues; that stretch reads SKTGKLSRTNSKKTIKN.

It belongs to the activator 1 small subunits family. RfcS subfamily.

Its function is as follows. Part of the RFC clamp loader complex which loads the PCNA sliding clamp onto DNA. This chain is Putative replication factor C small subunit L478, found in Acanthamoeba polyphaga (Amoeba).